Here is a 590-residue protein sequence, read N- to C-terminus: UvrABC system protein C (590 aa).

Residues 14 to 91 form the GIY-YIG domain; the sequence is DQPGCYLMKD…IKKYDPKYNV (78 aa). A UVR domain is found at 196-231; the sequence is NEVKKELEAKMLEASENLQFERAKEFRDQIAHIEST.

The protein belongs to the UvrC family. As to quaternary structure, interacts with UvrB in an incision complex.

Its subcellular location is the cytoplasm. Functionally, the UvrABC repair system catalyzes the recognition and processing of DNA lesions. UvrC both incises the 5' and 3' sides of the lesion. The N-terminal half is responsible for the 3' incision and the C-terminal half is responsible for the 5' incision. This is UvrABC system protein C from Bacillus licheniformis (strain ATCC 14580 / DSM 13 / JCM 2505 / CCUG 7422 / NBRC 12200 / NCIMB 9375 / NCTC 10341 / NRRL NRS-1264 / Gibson 46).